The sequence spans 765 residues: Protein transport protein sec23-2 (765 aa).

Zn(2+)-binding residues include Cys56, Cys60, Cys79, and Cys82. A phosphoserine mark is found at Ser565 and Ser566.

Belongs to the SEC23/SEC24 family. SEC23 subfamily. The COPII coat is composed of at least 5 proteins: the sec23/24 complex, the sec13/31 complex, and the protein sar1.

Its subcellular location is the cytoplasm. The protein resides in the cytoplasmic vesicle. It is found in the COPII-coated vesicle membrane. The protein localises to the endoplasmic reticulum membrane. It localises to the golgi apparatus membrane. Its function is as follows. Component of the coat protein complex II (COPII) which promotes the formation of transport vesicles from the endoplasmic reticulum (ER). The coat has two main functions, the physical deformation of the endoplasmic reticulum membrane into vesicles and the selection of cargo molecules. The polypeptide is Protein transport protein sec23-2 (sec232) (Schizosaccharomyces pombe (strain 972 / ATCC 24843) (Fission yeast)).